The following is a 507-amino-acid chain: MAWALKLPLADEVIESGLVQDFDASLSGIGQELGAGAYSMSDVLALPIFKQEESSLPSENENKILPFQYVLCTATSPAVKLHEETLTYLNQGQSYEIRMLDNRKMGELPELNGKLVKSIFRVVFHDRRLQYTEHQQLEGWRWNRPGDRILDIDIPMSVGIIDPRANPTQLNTVEFLWDPAKRTSVFIQVHCISTEFTMRKHGGEKGVPFRVQIDTFKENENGEYTEHLHSASCQIKVFKPKGADRKQKTDREKMEKRTPQEKEKYQPSYETTILTECSPWPEITYVSNAPSPGFNSSHNSFPIGEGNGSPNHQPEPPAPIVDVSAGLTPIQNLLPTSTPQEAQQWLHRNRFAAFSRLFTNFSGADLLKLTRDDVIQICGPADGIRLFNALKGRMVRPRLTIYVCQESQQLREQQQQHKHENGEAGNSAFYVYHAIYLEEMTAIELTEKIAQLFSISPHQINQIYKQGPTGIHVLISDEMIQNFQDESCFILDTMKAETNDSYHIILK.

The 240-residue stretch at 61-300 (ENKILPFQYV…SPGFNSSHNS (240 aa)) folds into the Grh/CP2 DB domain. Residues 133–395 (EHQQLEGWRW…LFNALKGRMV (263 aa)) form a DNA-binding region. 2 disordered regions span residues 240–268 (PKGA…YQPS) and 296–316 (SSHN…QPEP). The span at 241-265 (KGADRKQKTDREKMEKRTPQEKEKY) shows a compositional bias: basic and acidic residues.

The protein belongs to the grh/CP2 family. CP2 subfamily. Component of the SSP (stage selector protein) complex, which appears to be a heteromer of TFCP2 and 2 copies of NFE4.

It localises to the nucleus. In terms of biological role, may function as a transcription factor. The polypeptide is Transcription factor CP2 (tfcp2) (Xenopus tropicalis (Western clawed frog)).